Reading from the N-terminus, the 347-residue chain is uncharacterized protein (347 aa).

This is an uncharacterized protein from Caenorhabditis elegans.